Reading from the N-terminus, the 452-residue chain is tRNA-2-methylthio-N(6)-dimethylallyladenosine synthase (452 aa).

The region spanning 5–121 (RRYHITTFGC…LADLLAQVEA (117 aa)) is the MTTase N-terminal domain. Residues Cys-14, Cys-50, Cys-84, Cys-156, Cys-160, and Cys-163 each contribute to the [4Fe-4S] cluster site. The 238-residue stretch at 142-379 (RDSTITAWVN…NHLVAQMAAD (238 aa)) folds into the Radical SAM core domain. The region spanning 382–446 (QRYLGRTEEV…AFSLTGQILS (65 aa)) is the TRAM domain.

Belongs to the methylthiotransferase family. MiaB subfamily. Monomer. Requires [4Fe-4S] cluster as cofactor.

The protein resides in the cytoplasm. The enzyme catalyses N(6)-dimethylallyladenosine(37) in tRNA + (sulfur carrier)-SH + AH2 + 2 S-adenosyl-L-methionine = 2-methylsulfanyl-N(6)-dimethylallyladenosine(37) in tRNA + (sulfur carrier)-H + 5'-deoxyadenosine + L-methionine + A + S-adenosyl-L-homocysteine + 2 H(+). Catalyzes the methylthiolation of N6-(dimethylallyl)adenosine (i(6)A), leading to the formation of 2-methylthio-N6-(dimethylallyl)adenosine (ms(2)i(6)A) at position 37 in tRNAs that read codons beginning with uridine. This is tRNA-2-methylthio-N(6)-dimethylallyladenosine synthase from Synechococcus elongatus (strain ATCC 33912 / PCC 7942 / FACHB-805) (Anacystis nidulans R2).